Reading from the N-terminus, the 190-residue chain is Adenylate kinase (190 aa).

Residue 12–17 (GSGKTT) participates in ATP binding. Residues 34 to 63 (STGDLLREEVASGSEYGKTIDSFISKGNLV) are NMP. AMP-binding positions include threonine 35, arginine 40, 61 to 63 (NLV), 88 to 91 (GYPR), and glutamine 95. An LID region spans residues 130-136 (GRARGAD). Residue arginine 131 coordinates ATP. The AMP site is built by arginine 133 and arginine 145. Arginine 173 lines the ATP pocket.

Belongs to the adenylate kinase family. In terms of assembly, monomer.

It is found in the cytoplasm. The catalysed reaction is AMP + ATP = 2 ADP. It participates in purine metabolism; AMP biosynthesis via salvage pathway; AMP from ADP: step 1/1. Catalyzes the reversible transfer of the terminal phosphate group between ATP and AMP. Plays an important role in cellular energy homeostasis and in adenine nucleotide metabolism. This chain is Adenylate kinase, found in Helicobacter hepaticus (strain ATCC 51449 / 3B1).